The sequence spans 50 residues: Apoptotic protease-activating factor 1 (50 aa).

Positions 1–31 (ILKKDNYSYISFYNALIHEGYKDLAALLHSG) constitute a CARD domain. In terms of domain architecture, NB-ARC spans 46–50 (GGITS).

In terms of assembly, monomer. Oligomerizes to a heptameric ring, known as the apoptosome, upon binding of cytochrome c and dATP. Oligomeric Apaf-1 and pro-caspase-9 bind to each other via their respective NH2-terminal CARD domains and consecutively mature caspase-9 is released from the complex. Interacts with APIP. Interacts (via CARD and NACHT domains) with NAIP/BIRC1 (via NACHT domain). Interacts with CIAO2A.

Its function is as follows. Oligomeric Apaf-1 mediates the cytochrome c-dependent autocatalytic activation of pro-caspase 9 (Apaf-3), leading to the activation of caspase-3 and apoptosis. This activation requires ATP. The polypeptide is Apoptotic protease-activating factor 1 (APAF1) (Canis lupus familiaris (Dog)).